The primary structure comprises 100 residues: uncharacterized protein (100 aa).

This is an uncharacterized protein from Homo sapiens (Human).